The chain runs to 130 residues: Seminal plasma protein pB1 (130 aa).

The signal sequence occupies residues 1 to 25 (MAPRLGIFLLWAGVSVFLPLDPVNG). 2 Fibronectin type-II domains span residues 39-83 (TSDD…YCRS) and 84-130 (TDYA…WRYC). Disulfide bonds link C44-C68, C58-C81, C89-C115, and C103-C130.

The protein belongs to the seminal plasma protein family. In terms of tissue distribution, component of seminal plasma.

It is found in the secreted. Functionally, may form a complex with spermadhesin AQN-1 which possesses phosphorylcholine-binding activity. The polypeptide is Seminal plasma protein pB1 (Sus scrofa (Pig)).